Here is a 300-residue protein sequence, read N- to C-terminus: Protein CANDIDATE G-PROTEIN COUPLED RECEPTOR 2 (300 aa).

Transmembrane regions (helical) follow at residues 37–57 (GFLH…YLAY), 73–93 (IMIA…AWCC), 110–130 (LTLF…AFLF), 152–172 (IGLD…PLFI), 183–203 (WGLW…IFFM), 222–242 (ITVM…TANG), and 245–265 (FGLW…LPLL).

This sequence belongs to the UPF0359 family. Interacts with GPA1. In terms of tissue distribution, expressed at low levels in seedlings.

The protein localises to the cell membrane. In terms of biological role, plays a role in plants and microbes interactions. G-protein coupled melatonin receptor involved in root growth mediated by the bacterial quorum-sensing signals N-acyl-homoserine lactones (AHLs). Binds to melatonin. Phytomelatonin receptor required, in collaboration with GPA1, for melatonin-mediated stomatal closure involving H(2)O(2) and Ca(2+) signals. Essential for melatonin-mediated plant response to osmotic stress probably by activating reactive oxygen species (ROS) scavenging ability. The protein is Protein CANDIDATE G-PROTEIN COUPLED RECEPTOR 2 of Arabidopsis thaliana (Mouse-ear cress).